The sequence spans 178 residues: Ribosome maturation factor RimP (178 aa).

It belongs to the RimP family.

It is found in the cytoplasm. Its function is as follows. Required for maturation of 30S ribosomal subunits. The sequence is that of Ribosome maturation factor RimP from Streptococcus pyogenes serotype M4 (strain MGAS10750).